The chain runs to 256 residues: Large ribosomal subunit protein bL28m (256 aa).

Residues 1 to 55 constitute a mitochondrion transit peptide; sequence MPLHKVPVGLWKRLRLREGIYSRLPAHYLRSLEEARTPTPVHFRPHGAKFKINPK.

This sequence belongs to the bacterial ribosomal protein bL28 family. In terms of assembly, component of the mitochondrial ribosome large subunit (39S) which comprises a 16S rRNA and about 50 distinct proteins. Interacts with OXA1L.

It is found in the mitochondrion. The protein is Large ribosomal subunit protein bL28m (MRPL28) of Bos taurus (Bovine).